We begin with the raw amino-acid sequence, 348 residues long: Xaa-Pro dipeptidase (348 aa).

Co(2+) is bound by residues aspartate 209, aspartate 220, histidine 284, glutamate 313, and glutamate 327.

Belongs to the peptidase M24B family. Archaeal-type prolidase subfamily. As to quaternary structure, homodimer. Requires Co(2+) as cofactor. The cofactor is Mn(2+).

It localises to the cytoplasm. It catalyses the reaction Xaa-L-Pro dipeptide + H2O = an L-alpha-amino acid + L-proline. Functionally, splits dipeptides with a prolyl in the C-terminal position and a nonpolar amino acid at the N-terminal position. This chain is Xaa-Pro dipeptidase (pepQ), found in Pyrococcus furiosus (strain ATCC 43587 / DSM 3638 / JCM 8422 / Vc1).